The sequence spans 341 residues: Anthranilate phosphoribosyltransferase (341 aa).

5-phospho-alpha-D-ribose 1-diphosphate is bound by residues G84, 87 to 88 (GD), T92, 94 to 97 (NIST), 112 to 120 (KHGNRSVSS), and S124. G84 contacts anthranilate. Position 96 (S96) interacts with Mg(2+). Residue N115 coordinates anthranilate. Residue R170 coordinates anthranilate. Mg(2+)-binding residues include D229 and E230.

Belongs to the anthranilate phosphoribosyltransferase family. Homodimer. Requires Mg(2+) as cofactor.

It carries out the reaction N-(5-phospho-beta-D-ribosyl)anthranilate + diphosphate = 5-phospho-alpha-D-ribose 1-diphosphate + anthranilate. The protein operates within amino-acid biosynthesis; L-tryptophan biosynthesis; L-tryptophan from chorismate: step 2/5. Catalyzes the transfer of the phosphoribosyl group of 5-phosphorylribose-1-pyrophosphate (PRPP) to anthranilate to yield N-(5'-phosphoribosyl)-anthranilate (PRA). This chain is Anthranilate phosphoribosyltransferase, found in Polynucleobacter asymbioticus (strain DSM 18221 / CIP 109841 / QLW-P1DMWA-1) (Polynucleobacter necessarius subsp. asymbioticus).